The chain runs to 883 residues: DNA mismatch repair protein MutS (883 aa).

619–626 (GPNMGGKS) serves as a coordination point for ATP.

It belongs to the DNA mismatch repair MutS family.

Its function is as follows. This protein is involved in the repair of mismatches in DNA. It is possible that it carries out the mismatch recognition step. This protein has a weak ATPase activity. This is DNA mismatch repair protein MutS from Marinomonas sp. (strain MWYL1).